Here is a 57-residue protein sequence, read N- to C-terminus: Ribosome modulation factor 2 (57 aa).

The interval methionine 1–lysine 24 is disordered.

It belongs to the ribosome modulation factor family.

The protein resides in the cytoplasm. In terms of biological role, during stationary phase, converts 70S ribosomes to an inactive dimeric form (100S ribosomes). The polypeptide is Ribosome modulation factor 2 (Colwellia psychrerythraea (strain 34H / ATCC BAA-681) (Vibrio psychroerythus)).